The primary structure comprises 382 residues: D-galactonate dehydratase (382 aa).

Asp-183 is a binding site for Mg(2+). The active-site Proton donor is His-185. Mg(2+) is bound by residues Glu-209 and Glu-235. His-285 serves as the catalytic Proton acceptor.

The protein belongs to the mandelate racemase/muconate lactonizing enzyme family. GalD subfamily. Requires Mg(2+) as cofactor.

It catalyses the reaction D-galactonate = 2-dehydro-3-deoxy-D-galactonate + H2O. It functions in the pathway carbohydrate acid metabolism; D-galactonate degradation; D-glyceraldehyde 3-phosphate and pyruvate from D-galactonate: step 1/3. Functionally, catalyzes the dehydration of D-galactonate to 2-keto-3-deoxy-D-galactonate. In Klebsiella pneumoniae (strain 342), this protein is D-galactonate dehydratase.